Consider the following 344-residue polypeptide: tRNA N6-adenosine threonylcarbamoyltransferase (344 aa).

2 residues coordinate Fe cation: H111 and H115. Substrate contacts are provided by residues L133 to G137, D166, G179, and N283. D311 is a binding site for Fe cation.

Belongs to the KAE1 / TsaD family. The cofactor is Fe(2+).

The protein localises to the cytoplasm. It catalyses the reaction L-threonylcarbamoyladenylate + adenosine(37) in tRNA = N(6)-L-threonylcarbamoyladenosine(37) in tRNA + AMP + H(+). Its function is as follows. Required for the formation of a threonylcarbamoyl group on adenosine at position 37 (t(6)A37) in tRNAs that read codons beginning with adenine. Is involved in the transfer of the threonylcarbamoyl moiety of threonylcarbamoyl-AMP (TC-AMP) to the N6 group of A37, together with TsaE and TsaB. TsaD likely plays a direct catalytic role in this reaction. This Orientia tsutsugamushi (strain Boryong) (Rickettsia tsutsugamushi) protein is tRNA N6-adenosine threonylcarbamoyltransferase.